The primary structure comprises 413 residues: Bestrophin homolog 13 (413 aa).

Helical transmembrane passes span 29–49 (LIYL…IDLI), 72–92 (SYTR…NVVA), 236–256 (LVYT…TLFG), and 272–292 (LVVP…FKVG).

The protein belongs to the anion channel-forming bestrophin (TC 1.A.46) family. Calcium-sensitive chloride channel subfamily. In terms of assembly, forms oligomers.

Its subcellular location is the cell membrane. Its function is as follows. Forms chloride channels. This Caenorhabditis elegans protein is Bestrophin homolog 13 (best-13).